The sequence spans 69 residues: Small archaeal modifier protein 2 (69 aa).

Lys55 participates in a covalent cross-link: Glycyl lysine isopeptide (Lys-Gly) (interchain with G-Cter in SAMP2). Gly69 is subject to 1-thioglycine; alternate. Gly69 is modified (glycyl adenylate; alternate). Gly69 participates in a covalent cross-link: Glycyl lysine isopeptide (Gly-Lys) (interchain with K-? in acceptor proteins); alternate.

Post-translationally, the C-terminal glycine is likely acyl-adenylated (-COAMP) by UbaA, and also probably thiocarboxylated (-COSH) to function in sulfur transfer.

Its function is as follows. Functions as a protein modifier covalently attached to lysine residues of substrate proteins, as well as a sulfur carrier in tRNA thiolation. The protein modification process is termed sampylation and involves the formation of an isopeptide bond between the SAMP2 C-terminal glycine carboxylate and the epsilon-amino group of lysine residues on target proteins. Is able to form polymeric chains with itself likely at Lys-55, similar to ubiquitin and other ubiquitin-like proteins. May serve as a proteolytic signal in the cell to target proteins for degradation by proteasomes. In Pyrococcus furiosus (strain ATCC 43587 / DSM 3638 / JCM 8422 / Vc1), this protein is Small archaeal modifier protein 2.